A 175-amino-acid chain; its full sequence is Zinc finger protein ZAT18 (175 aa).

C2H2-type zinc fingers lie at residues 49 to 71 (FECKTCNRKFDSFQALGGHRASH) and 93 to 115 (HKCTICDQMFGTGQALGGHMRKH). The Nuclear localization signal motif lies at 71–78 (HKKPKLIV). The EAR-like (transcriptional repression) motif lies at 146–152 (LDLNLTP).

In terms of tissue distribution, mostly expressed in stems, siliques and leaves, and, to a lower extent, in cotyledons, hypocotyls and roots.

It localises to the nucleus. In terms of biological role, transcription factor involved in stress responses. Positive regulator of the jasmonic acid (JA)- mediated signaling pathway. Triggers the up-regulation of LOX3, VSP2, PAL1 and PAL2 in a JA-dependent manner. Promotes drought and osmotic stress tolerance by preventing reactive oxygen species (ROS) production (e.g. H(2)O(2)). This chain is Zinc finger protein ZAT18, found in Arabidopsis thaliana (Mouse-ear cress).